We begin with the raw amino-acid sequence, 283 residues long: NAD kinase (283 aa).

The active-site Proton acceptor is aspartate 73. NAD(+)-binding positions include 73–74 (DG), 146–147 (NE), histidine 157, histidine 176, aspartate 178, 189–194 (TAYNLS), and alanine 213.

Belongs to the NAD kinase family. A divalent metal cation is required as a cofactor.

The protein localises to the cytoplasm. The enzyme catalyses NAD(+) + ATP = ADP + NADP(+) + H(+). Its function is as follows. Involved in the regulation of the intracellular balance of NAD and NADP, and is a key enzyme in the biosynthesis of NADP. Catalyzes specifically the phosphorylation on 2'-hydroxyl of the adenosine moiety of NAD to yield NADP. This is NAD kinase from Haloarcula marismortui (strain ATCC 43049 / DSM 3752 / JCM 8966 / VKM B-1809) (Halobacterium marismortui).